We begin with the raw amino-acid sequence, 129 residues long: Thyroid hormone receptor alpha (129 aa).

The NR LBD domain occupies 26–129 (AEWELIRMVT…EIMSLRAAVR (104 aa)). 3,3',5-triiodo-L-thyronine is bound at residue arginine 91.

Belongs to the nuclear hormone receptor family. NR1 subfamily.

It is found in the nucleus. Its function is as follows. Nuclear hormone receptor that can act as a repressor or activator of transcription. High affinity receptor for thyroid hormones, including triiodothyronine and thyroxine. This chain is Thyroid hormone receptor alpha (thra1), found in Sparus aurata (Gilthead sea bream).